An 89-amino-acid chain; its full sequence is Small ribosomal subunit protein uS14A (89 aa).

The segment at 29–62 is disordered; sequence AAGDRTALAKLPRDSNPNRLRLRDQTDGRPRGYM. Positions 49–58 are enriched in basic and acidic residues; that stretch reads RLRDQTDGRP.

The protein belongs to the universal ribosomal protein uS14 family. Part of the 30S ribosomal subunit. Contacts proteins S3 and S10.

In terms of biological role, binds 16S rRNA, required for the assembly of 30S particles and may also be responsible for determining the conformation of the 16S rRNA at the A site. The chain is Small ribosomal subunit protein uS14A from Enterococcus faecalis (strain ATCC 700802 / V583).